Reading from the N-terminus, the 556-residue chain is Formate--tetrahydrofolate ligase (556 aa).

ATP is bound at residue 65-72 (TPAGEGKS).

It belongs to the formate--tetrahydrofolate ligase family.

It catalyses the reaction (6S)-5,6,7,8-tetrahydrofolate + formate + ATP = (6R)-10-formyltetrahydrofolate + ADP + phosphate. It participates in one-carbon metabolism; tetrahydrofolate interconversion. The protein is Formate--tetrahydrofolate ligase of Streptococcus equi subsp. equi (strain 4047).